The sequence spans 95 residues: MTFRPLHDRVLVRRVEAEEKTAGGIIIPDSAKEKPAEGIVVAVGSGARAENGTITPLDVKANDRVLFGKWSGTEVKVDGEDLLIMKESDILGVIG.

It belongs to the GroES chaperonin family. As to quaternary structure, heptamer of 7 subunits arranged in a ring. Interacts with the chaperonin GroEL.

The protein localises to the cytoplasm. Together with the chaperonin GroEL, plays an essential role in assisting protein folding. The GroEL-GroES system forms a nano-cage that allows encapsulation of the non-native substrate proteins and provides a physical environment optimized to promote and accelerate protein folding. GroES binds to the apical surface of the GroEL ring, thereby capping the opening of the GroEL channel. The protein is Co-chaperonin GroES of Novosphingobium aromaticivorans (strain ATCC 700278 / DSM 12444 / CCUG 56034 / CIP 105152 / NBRC 16084 / F199).